The chain runs to 37 residues: MKVRPSVKKVCPKCKVIRRKGVLRVICENPRHKQRQG.

This sequence belongs to the bacterial ribosomal protein bL36 family.

This chain is Large ribosomal subunit protein bL36 (rpmJ), found in Oleidesulfovibrio alaskensis (strain ATCC BAA-1058 / DSM 17464 / G20) (Desulfovibrio alaskensis).